Here is a 483-residue protein sequence, read N- to C-terminus: Glutamate--tRNA ligase (483 aa).

The 'HIGH' region signature appears at 11 to 21 (PSPTGHLHIGN). Positions 108, 110, 135, and 137 each coordinate Zn(2+). The short motif at 252–256 (KLSKR) is the 'KMSKS' region element. Residue K255 coordinates ATP.

This sequence belongs to the class-I aminoacyl-tRNA synthetase family. Glutamate--tRNA ligase type 1 subfamily. As to quaternary structure, monomer. Zn(2+) serves as cofactor.

The protein localises to the cytoplasm. It carries out the reaction tRNA(Glu) + L-glutamate + ATP = L-glutamyl-tRNA(Glu) + AMP + diphosphate. In terms of biological role, catalyzes the attachment of glutamate to tRNA(Glu) in a two-step reaction: glutamate is first activated by ATP to form Glu-AMP and then transferred to the acceptor end of tRNA(Glu). The sequence is that of Glutamate--tRNA ligase from Bacillus pumilus (strain SAFR-032).